We begin with the raw amino-acid sequence, 1054 residues long: Proteoglycan 4 (1054 aa).

Positions 1-24 (MGWKILPVCLSLLLPVVLIQQVSS) are cleaved as a signal peptide. SMB domains are found at residues 26-69 (DLSS…PELS) and 66-108 (PELS…EEVH). 14 disulfides stabilise this stretch: Cys-30–Cys-34, Cys-30–Cys-46, Cys-34–Cys-64, Cys-44–Cys-46, Cys-44–Cys-57, Cys-50–Cys-56, Cys-57–Cys-64, Cys-70–Cys-74, Cys-70–Cys-86, Cys-74–Cys-104, Cys-84–Cys-86, Cys-84–Cys-97, Cys-90–Cys-96, and Cys-97–Cys-104. Asn-109 is a glycosylation site (N-linked (GlcNAc...) asparagine). Low complexity predominate over residues 110–125 (STSPSSKTAPTPAGAS). Residues 110–764 (STSPSSKTAP…PLIPGPPVLF (655 aa)) are disordered. O-linked (GalNAc...) serine glycosylation is present at Ser-135. Positions 162 to 175 (QESSSSSSSSSSTI) are enriched in low complexity. A compositionally biased stretch (basic and acidic residues) spans 188 to 200 (ELQKNPNVKDNKK). Over residues 229 to 238 (TPPPPDPPTT) the composition is skewed to pro residues. O-linked (GalNAc...) threonine glycans are attached at residues Thr-237 and Thr-250. Residues 286–295 (TTATNKQSSA) show a composition bias toward low complexity. O-linked (GalNAc...) threonine glycosylation occurs at Thr-301. A glycan (O-linked (GalNAc...) serine) is linked at Ser-302. The span at 302 to 318 (SVKETRSAEKTSDKDVE) shows a compositional bias: basic and acidic residues. O-linked (GalNAc...) threonine glycosylation occurs at Thr-306. Ser-313 is a glycosylation site (O-linked (GalNAc...) serine). The 1; approximate repeat unit spans residues 317-324 (VEPTSTTP). Residues 317-618 (VEPTSTTPKN…TPKKPEPTTT (302 aa)) are 37 X 8 AA repeats of K-X-P-X-P-T-T-X. Positions 319-328 (PTSTTPKNSA) are enriched in polar residues. The 2; approximate repeat unit spans residues 325-332 (KNSAPTTT). An O-linked (GalNAc...) serine glycan is attached at Ser-327. The segment covering 329–339 (PTTTKKPVTTT) has biased composition (low complexity). Residues Thr-330, Thr-338, Thr-354, Thr-362, Thr-369, Thr-377, Thr-378, Thr-385, Thr-386, Thr-393, and Thr-394 are each glycosylated (O-linked (GalNAc...) threonine). The 3; approximate repeat unit spans residues 333–340 (KKPVTTTK). The 4; approximate repeat unit spans residues 349 to 356 (QEPEPTTA). Copy 5 of the repeat occupies 357–364 (KEPPPTTK). A compositionally biased stretch (basic and acidic residues) spans 364-399 (KKPEPTTRKEPEPTTPKEPEPTTPKEPEPTTPKEPE). The 6; approximate repeat unit spans residues 365–371 (KPEPTTR). 5 repeat units span residues 372–379 (KEPEPTTP), 380–387 (KEPEPTTP), 388–395 (KEPEPTTP), 396–403 (KEPEPTTP), and 404–411 (KEPPPTTK). The segment covering 400-426 (PTTPKEPPPTTKKPEPTTPKEPGPTTP) has biased composition (pro residues). Residues 412–418 (KPEPTTP) form a 12; approximate repeat. O-linked (GalNAc...) threonine glycans are attached at residues Thr-416, Thr-417, Thr-424, Thr-432, Thr-433, Thr-440, Thr-441, and Thr-448. A run of 3 repeats spans residues 419–426 (KEPGPTTP), 427–434 (KEPEPTTT), and 435–442 (KEPEPTTT). Positions 427–550 (KEPEPTTTKE…PEPTTPKKPE (124 aa)) are enriched in basic and acidic residues. One copy of the 16; approximate repeat lies at 443 to 450 (KEPESTTR). 21 tandem repeats follow at residues 451–458 (KEPEPTTP), 459–466 (KEPEPTTP), 467–474 (KEPEPTTL), 475–482 (KEPEPTTP), 483–490 (KEPEPTTP), 491–498 (KEPEPTTP), 499–506 (KEPEPTTP), 507–514 (KEPEPTTP), 515–522 (KEPEPTTP), 523–530 (KEPEPTTP), 531–538 (KEPEPTTP), 539–546 (KEPEPTTP), 547–554 (KKPEPTTP), 555–562 (KEPVPTTP), 563–570 (KEPEPTTP), 571–578 (KEPEPTTP), 579–586 (KEPEPTTR), 587–594 (KEPEPTTP), 595–602 (KEPEPTTP), 603–610 (KEPEPTTP), and 611–618 (KKPEPTTT). 14 O-linked (GalNAc...) threonine glycosylation sites follow: Thr-472, Thr-480, Thr-481, Thr-488, Thr-489, Thr-496, Thr-497, Thr-504, Thr-505, Thr-512, Thr-520, Thr-521, Thr-528, and Thr-529. A compositionally biased stretch (pro residues) spans 551–562 (PTTPKEPVPTTP). 7 O-linked (GalNAc...) threonine glycosylation sites follow: Thr-553, Thr-560, Thr-561, Thr-568, Thr-569, Thr-576, and Thr-577. The segment covering 563 to 614 (KEPEPTTPKEPEPTTPKEPEPTTRKEPEPTTPKEPEPTTPKEPEPTTPKKPE) has biased composition (basic and acidic residues). O-linked (GalNAc...) threonine glycans are attached at residues Thr-592, Thr-600, and Thr-601. Positions 615 to 624 (PTTTSPKTTT) are enriched in low complexity. Thr-622, Thr-624, Thr-628, Thr-629, and Thr-692 each carry an O-linked (GalNAc...) threonine glycan. Residues 672 to 699 (KPTKKPTKAPKKPTSTKKPKTPKTRKPK) are compositionally biased toward basic residues. The segment covering 700-712 (TTPSPLKTTSATP) has biased composition (low complexity). Over residues 713–735 (ELNTTPLEVMLPTTTIPKQTPNP) the composition is skewed to polar residues. A disulfide bridge links Cys-795 with Cys-1053. Hemopexin repeat units lie at residues 797–840 (GKPV…VWGI) and 841–888 (PSPI…FGGL). Asn-808 carries N-linked (GlcNAc...) asparagine glycosylation. A glycan (O-linked (GalNAc...) threonine) is linked at Thr-810. Asn-938 is a glycosylation site (N-linked (GlcNAc...) asparagine).

Homodimer; disulfide-linked. N-glycosylated. In terms of processing, O-glycosylated; contains glycosaminoglycan chondroitin sulfate and keratan sulfate. O-glycosylated with sialylated oligosaccharides which are predominantly represented by the monosialylated core type I structure, NeuNAcalpha2-3Galbeta1-3GalNAc, with smaller amounts of disialylated O-glycans. Post-translationally, the disulfide bond between Cys-795 and Cys-1053 is essential for protein cleavage. Proteolytically cleaved by cathepsin CTSG. As to expression, highly expressed in cartilage, bone and liver and weakly expressed in heart, brain and muscle. Expressed in the surface chondrocytes and in synovial intimal cells. Isoform B is expressed in bone, small intestine, muscle, testis, heart, liver and lung. Isoform C and isoform D are widely expressed.

The protein localises to the secreted. Functionally, plays a role in boundary lubrication within articulating joints. Prevents protein deposition onto cartilage from synovial fluid by controlling adhesion-dependent synovial growth and inhibiting the adhesion of synovial cells to the cartilage surface. The chain is Proteoglycan 4 (Prg4) from Mus musculus (Mouse).